We begin with the raw amino-acid sequence, 313 residues long: Adhesin MafA 2 (313 aa).

An N-terminal signal peptide occupies residues 1 to 14 (MKTLLLLIPLVLTA). Cys15 carries the N-palmitoyl cysteine lipid modification. Residue Cys15 is the site of S-diacylglycerol cysteine attachment. A compositionally biased stretch (polar residues) spans 282–297 (GDTTAQNRPDFKQNNG). Residues 282-313 (GDTTAQNRPDFKQNNGKKPDVGNEVIRRRKGG) form a disordered region.

It belongs to the MafA family.

The protein resides in the cell outer membrane. The polypeptide is Adhesin MafA 2 (mafA2) (Neisseria meningitidis serogroup C / serotype 2a (strain ATCC 700532 / DSM 15464 / FAM18)).